The primary structure comprises 576 residues: Formate--tetrahydrofolate ligase 2 (576 aa).

Position 69 to 76 (69 to 76 (TPLGEGKT)) interacts with ATP.

Belongs to the formate--tetrahydrofolate ligase family.

It catalyses the reaction (6S)-5,6,7,8-tetrahydrofolate + formate + ATP = (6R)-10-formyltetrahydrofolate + ADP + phosphate. It functions in the pathway one-carbon metabolism; tetrahydrofolate interconversion. In Rubrobacter xylanophilus (strain DSM 9941 / JCM 11954 / NBRC 16129 / PRD-1), this protein is Formate--tetrahydrofolate ligase 2.